The following is a 171-amino-acid chain: uncharacterized protein (171 aa).

The interval 56 to 83 (TVGVNKNAKNGPTQSQTRSGSAGAQARM) is disordered. The span at 57-77 (VGVNKNAKNGPTQSQTRSGSA) shows a compositional bias: polar residues. One can recognise a J domain in the interval 113–170 (KAFETLGLGASATTADIKAAYKDLVKKHHPDANGGDRGSEERFRAVIQAYQLLKQAGF).

This is an uncharacterized protein from Sinorhizobium sp.